The primary structure comprises 688 residues: Subtilisin-like protease 1 (688 aa).

The first 25 residues, 1 to 25, serve as a signal peptide directing secretion; that stretch reads MMLNKKVVALCTLTLHLFCIFLCLG. A propeptide spans 26-217 (inhibition peptide); the sequence is KEVRSEENGK…IESDKLVSAD (192 aa). The interval 99–129 is disordered; that stretch reads EKNKNDNHNNNNNNISSSSSSSSNTFGEEKE. The span at 106–122 shows a compositional bias: low complexity; sequence HNNNNNNISSSSSSSSN. Asn112 carries an N-linked (GlcNAc...) asparagine glycan. 3 residues coordinate Ca(2+): Asn145, Thr148, and Pro150. A glycan (N-linked (GlcNAc...) asparagine) is linked at Asn171. Gly205 contacts Ca(2+). Residue Asn261 is glycosylated (N-linked (GlcNAc...) asparagine). Disordered regions lie at residues 264–284 and 303–332; these read HAAT…DTFS and NNNN…RPGK. The segment covering 303–328 has biased composition (low complexity); sequence NNNNYYYSHSSNGHNSSSRNSSSSRS. Asn317 and Asn322 each carry an N-linked (GlcNAc...) asparagine glycan. Asp337 contributes to the Ca(2+) binding site. In terms of domain architecture, Peptidase S8 spans 343 to 661; it reads QWGLDLSRLD…AGYADINKAV (319 aa). Cystine bridges form between Cys369/Cys479 and Cys458/Cys475. Asp372 acts as the Charge relay system in catalysis. 11 residues coordinate Ca(2+): Asp381, Glu392, Arg396, Phe399, Asp400, Asp401, Asp402, Asn404, Ile406, Asp408, and Asp409. Residue Asn417 is glycosylated (N-linked (GlcNAc...) asparagine). His428 serves as the catalytic Charge relay system. The Ca(2+) site is built by Ile439, Asn442, Ile444, and Val446. 3 N-linked (GlcNAc...) asparagine glycosylation sites follow: Asn488, Asn501, and Asn520. A disulfide bond links Cys521 and Cys534. N-linked (GlcNAc...) asparagine glycosylation occurs at Asn603. Ser606 functions as the Charge relay system in the catalytic mechanism. N-linked (GlcNAc...) asparagine glycosylation occurs at Asn675.

It belongs to the peptidase S8 family. Heterodimer between p54 form and prodomain p31; the interaction inhibits p54 catalytic activity. Heterodimer p31-p54 is monomeric at basic pH and dimeric at acidic pH; dimerization is driven by the N-terminal prodomain (p31). Ca(2+) is required as a cofactor. The prodomain (p31) is cleaved, probably by autocatalysis, during the transport to or in the Golgi apparatus, and remains non-covalently associated with the p54 form as an inhibitor. p54 is further cleaved into the p47 form. The p54-to-p47 conversion can be also autocatalytic. This cleavage is likely occurring in the exoneme prior to egress and is mediated by PMX/plasmepsin X. Heterodimer p31-p54 is activated by cleavage of prodomain (p31) by the aspartic protease PMX; cleavage by PMX abolishes inhibitory capacity of p31. Primary autocatalytic processing of SUB1 is essential for parasite growth; the p54-to-p47 conversion is dispensable for SUB1 functions in the parasites. In terms of processing, the disulfide bond between Cys-521 and Cys-534 acts as a redox-sensitive disulfide switch. The oxidized form is required for catalytic activity. Post-translationally, the relevance of the N-glycosylation is not clear. In an insect expression system, SUB1 glycosylation appears to affect its processing into the active mature form suggesting that SUB1 may not be N-glycosylated in parasites.

It localises to the secreted. Its subcellular location is the parasitophorous vacuole lumen. The catalysed reaction is Hydrolysis of proteins with broad specificity for peptide bonds, and a preference for a large uncharged residue in P1. Hydrolyzes peptide amides.. Its activity is regulated as follows. p54 and probably p47 forms are inhibited by the non-covalent interaction with the cleaved propeptide. Inhibited by subtilisin propeptide-like protein SUB1-ProM. Inhibited by small molecule MRT12113. In terms of biological role, serine protease which plays an essential role in merozoite invasion of and egress from host erythrocytes by processing and activating various merozoite surface and parasitophorous vacuole proteins. Mediates the proteolytic maturation of serine proteases SERA4, SERA5 and SERA6 just prior to merozoite egress. Prior to merozoite egress, cleaves merozoite surface proteins MSP1, MSP6 and MSP7, which form the MSP1/6/7 complex, and thereby may prime the parasite cell surface for invasion of fresh erythrocytes. Prior to merozoite egress, cleaves MSRP2 converting it to MSRP2 p25 form, and RAP1 converting it to RAP1 p67 form. In Plasmodium falciparum (isolate 3D7), this protein is Subtilisin-like protease 1.